The chain runs to 488 residues: ATP synthase subunit beta (488 aa).

Position 164-171 (164-171 (GGAGVGKT)) interacts with ATP.

It belongs to the ATPase alpha/beta chains family. In terms of assembly, F-type ATPases have 2 components, CF(1) - the catalytic core - and CF(0) - the membrane proton channel. CF(1) has five subunits: alpha(3), beta(3), gamma(1), delta(1), epsilon(1). CF(0) has four main subunits: a(1), b(1), b'(1) and c(9-12).

It is found in the cellular thylakoid membrane. The enzyme catalyses ATP + H2O + 4 H(+)(in) = ADP + phosphate + 5 H(+)(out). Functionally, produces ATP from ADP in the presence of a proton gradient across the membrane. The catalytic sites are hosted primarily by the beta subunits. In Prochlorococcus marinus (strain MIT 9313), this protein is ATP synthase subunit beta.